A 172-amino-acid chain; its full sequence is Adenine phosphoribosyltransferase (172 aa).

It belongs to the purine/pyrimidine phosphoribosyltransferase family. In terms of assembly, homodimer.

The protein localises to the cytoplasm. The enzyme catalyses AMP + diphosphate = 5-phospho-alpha-D-ribose 1-diphosphate + adenine. It functions in the pathway purine metabolism; AMP biosynthesis via salvage pathway; AMP from adenine: step 1/1. Its function is as follows. Catalyzes a salvage reaction resulting in the formation of AMP, that is energically less costly than de novo synthesis. In Latilactobacillus sakei subsp. sakei (strain 23K) (Lactobacillus sakei subsp. sakei), this protein is Adenine phosphoribosyltransferase.